A 129-amino-acid polypeptide reads, in one-letter code: Small ribosomal subunit protein uS9 (129 aa).

The protein belongs to the universal ribosomal protein uS9 family.

The polypeptide is Small ribosomal subunit protein uS9 (Chlorobium phaeovibrioides (strain DSM 265 / 1930) (Prosthecochloris vibrioformis (strain DSM 265))).